A 126-amino-acid polypeptide reads, in one-letter code: Ribosome-binding factor A (126 aa).

This sequence belongs to the RbfA family. Monomer. Binds 30S ribosomal subunits, but not 50S ribosomal subunits or 70S ribosomes.

It localises to the cytoplasm. One of several proteins that assist in the late maturation steps of the functional core of the 30S ribosomal subunit. Associates with free 30S ribosomal subunits (but not with 30S subunits that are part of 70S ribosomes or polysomes). Required for efficient processing of 16S rRNA. May interact with the 5'-terminal helix region of 16S rRNA. The chain is Ribosome-binding factor A from Geobacillus sp. (strain WCH70).